The chain runs to 318 residues: Acetyl-coenzyme A carboxylase carboxyl transferase subunit alpha (318 aa).

The region spanning 32–293 is the CoA carboxyltransferase C-terminal domain; sequence NLSDELERLR…KERLVSQLDR (262 aa).

It belongs to the AccA family. In terms of assembly, acetyl-CoA carboxylase is a heterohexamer composed of biotin carboxyl carrier protein (AccB), biotin carboxylase (AccC) and two subunits each of ACCase subunit alpha (AccA) and ACCase subunit beta (AccD).

The protein localises to the cytoplasm. The catalysed reaction is N(6)-carboxybiotinyl-L-lysyl-[protein] + acetyl-CoA = N(6)-biotinyl-L-lysyl-[protein] + malonyl-CoA. Its pathway is lipid metabolism; malonyl-CoA biosynthesis; malonyl-CoA from acetyl-CoA: step 1/1. Its function is as follows. Component of the acetyl coenzyme A carboxylase (ACC) complex. First, biotin carboxylase catalyzes the carboxylation of biotin on its carrier protein (BCCP) and then the CO(2) group is transferred by the carboxyltransferase to acetyl-CoA to form malonyl-CoA. This is Acetyl-coenzyme A carboxylase carboxyl transferase subunit alpha from Saccharophagus degradans (strain 2-40 / ATCC 43961 / DSM 17024).